The following is a 173-amino-acid chain: RNA pyrophosphohydrolase (173 aa).

Residues 11–164 form the Nudix hydrolase domain; it reads PYRKCVGILV…KKHVYTQVVK (154 aa). The Nudix box motif lies at 52-73; that stretch reads GGINQGEKPIDAARRELYEETG.

This sequence belongs to the Nudix hydrolase family. RppH subfamily. A divalent metal cation is required as a cofactor.

Accelerates the degradation of transcripts by removing pyrophosphate from the 5'-end of triphosphorylated RNA, leading to a more labile monophosphorylated state that can stimulate subsequent ribonuclease cleavage. This chain is RNA pyrophosphohydrolase, found in Bartonella clarridgeiae.